The sequence spans 166 residues: 3-isopropylmalate dehydratase small subunit (166 aa).

It belongs to the LeuD family. LeuD type 2 subfamily. As to quaternary structure, heterodimer of LeuC and LeuD.

It catalyses the reaction (2R,3S)-3-isopropylmalate = (2S)-2-isopropylmalate. The protein operates within amino-acid biosynthesis; L-leucine biosynthesis; L-leucine from 3-methyl-2-oxobutanoate: step 2/4. Functionally, catalyzes the isomerization between 2-isopropylmalate and 3-isopropylmalate, via the formation of 2-isopropylmaleate. The chain is 3-isopropylmalate dehydratase small subunit from Moorella thermoacetica (strain ATCC 39073 / JCM 9320).